A 173-amino-acid chain; its full sequence is Crossover junction endodeoxyribonuclease RuvC (173 aa).

Catalysis depends on residues Asp8, Glu67, and Asp139. Asp8, Glu67, and Asp139 together coordinate Mg(2+).

It belongs to the RuvC family. As to quaternary structure, homodimer which binds Holliday junction (HJ) DNA. The HJ becomes 2-fold symmetrical on binding to RuvC with unstacked arms; it has a different conformation from HJ DNA in complex with RuvA. In the full resolvosome a probable DNA-RuvA(4)-RuvB(12)-RuvC(2) complex forms which resolves the HJ. Mg(2+) serves as cofactor.

The protein localises to the cytoplasm. The enzyme catalyses Endonucleolytic cleavage at a junction such as a reciprocal single-stranded crossover between two homologous DNA duplexes (Holliday junction).. The RuvA-RuvB-RuvC complex processes Holliday junction (HJ) DNA during genetic recombination and DNA repair. Endonuclease that resolves HJ intermediates. Cleaves cruciform DNA by making single-stranded nicks across the HJ at symmetrical positions within the homologous arms, yielding a 5'-phosphate and a 3'-hydroxyl group; requires a central core of homology in the junction. The consensus cleavage sequence is 5'-(A/T)TT(C/G)-3'. Cleavage occurs on the 3'-side of the TT dinucleotide at the point of strand exchange. HJ branch migration catalyzed by RuvA-RuvB allows RuvC to scan DNA until it finds its consensus sequence, where it cleaves and resolves the cruciform DNA. In Psychromonas ingrahamii (strain DSM 17664 / CCUG 51855 / 37), this protein is Crossover junction endodeoxyribonuclease RuvC.